The primary structure comprises 276 residues: Bifunctional protein FolD 1 (276 aa).

Residues Gly161–Gly163, Ser186, and Thr227 contribute to the NADP(+) site.

It belongs to the tetrahydrofolate dehydrogenase/cyclohydrolase family. In terms of assembly, homodimer.

It carries out the reaction (6R)-5,10-methylene-5,6,7,8-tetrahydrofolate + NADP(+) = (6R)-5,10-methenyltetrahydrofolate + NADPH. The enzyme catalyses (6R)-5,10-methenyltetrahydrofolate + H2O = (6R)-10-formyltetrahydrofolate + H(+). It participates in one-carbon metabolism; tetrahydrofolate interconversion. Functionally, catalyzes the oxidation of 5,10-methylenetetrahydrofolate to 5,10-methenyltetrahydrofolate and then the hydrolysis of 5,10-methenyltetrahydrofolate to 10-formyltetrahydrofolate. This Frankia casuarinae (strain DSM 45818 / CECT 9043 / HFP020203 / CcI3) protein is Bifunctional protein FolD 1.